Reading from the N-terminus, the 90-residue chain is ATP synthase subunit c (90 aa).

2 helical membrane-spanning segments follow: residues proline 17 to valine 37 and leucine 70 to valine 90.

It belongs to the ATPase C chain family. F-type ATPases have 2 components, F(1) - the catalytic core - and F(0) - the membrane proton channel. F(1) has five subunits: alpha(3), beta(3), gamma(1), delta(1), epsilon(1). F(0) has three main subunits: a(1), b(2) and c(10-14). The alpha and beta chains form an alternating ring which encloses part of the gamma chain. F(1) is attached to F(0) by a central stalk formed by the gamma and epsilon chains, while a peripheral stalk is formed by the delta and b chains.

Its subcellular location is the cell membrane. F(1)F(0) ATP synthase produces ATP from ADP in the presence of a proton or sodium gradient. F-type ATPases consist of two structural domains, F(1) containing the extramembraneous catalytic core and F(0) containing the membrane proton channel, linked together by a central stalk and a peripheral stalk. During catalysis, ATP synthesis in the catalytic domain of F(1) is coupled via a rotary mechanism of the central stalk subunits to proton translocation. Its function is as follows. Key component of the F(0) channel; it plays a direct role in translocation across the membrane. A homomeric c-ring of between 10-14 subunits forms the central stalk rotor element with the F(1) delta and epsilon subunits. The protein is ATP synthase subunit c of Metamycoplasma arthritidis (strain 158L3-1) (Mycoplasma arthritidis).